Consider the following 458-residue polypeptide: UDP-N-acetylglucosamine 1-carboxyvinyltransferase (458 aa).

34 to 35 (KN) lines the phosphoenolpyruvate pocket. Arg104 is a binding site for UDP-N-acetyl-alpha-D-glucosamine. The active-site Proton donor is the Cys128. 2-(S-cysteinyl)pyruvic acid O-phosphothioketal is present on Cys128. Residues Asp320 and Val342 each contribute to the UDP-N-acetyl-alpha-D-glucosamine site.

The protein belongs to the EPSP synthase family. MurA subfamily.

It localises to the cytoplasm. It catalyses the reaction phosphoenolpyruvate + UDP-N-acetyl-alpha-D-glucosamine = UDP-N-acetyl-3-O-(1-carboxyvinyl)-alpha-D-glucosamine + phosphate. It participates in cell wall biogenesis; peptidoglycan biosynthesis. Cell wall formation. Adds enolpyruvyl to UDP-N-acetylglucosamine. This Prochlorococcus marinus (strain NATL2A) protein is UDP-N-acetylglucosamine 1-carboxyvinyltransferase.